The primary structure comprises 429 residues: 3-phosphoshikimate 1-carboxyvinyltransferase (429 aa).

3-phosphoshikimate contacts are provided by lysine 23, serine 24, and arginine 28. Lysine 23 contributes to the phosphoenolpyruvate binding site. Positions 95 and 123 each coordinate phosphoenolpyruvate. Positions 168, 170, 316, and 343 each coordinate 3-phosphoshikimate. Residue glutamine 170 coordinates phosphoenolpyruvate. Aspartate 316 (proton acceptor) is an active-site residue. 2 residues coordinate phosphoenolpyruvate: arginine 347 and arginine 389.

Belongs to the EPSP synthase family. As to quaternary structure, monomer.

The protein localises to the cytoplasm. It carries out the reaction 3-phosphoshikimate + phosphoenolpyruvate = 5-O-(1-carboxyvinyl)-3-phosphoshikimate + phosphate. Its pathway is metabolic intermediate biosynthesis; chorismate biosynthesis; chorismate from D-erythrose 4-phosphate and phosphoenolpyruvate: step 6/7. Functionally, catalyzes the transfer of the enolpyruvyl moiety of phosphoenolpyruvate (PEP) to the 5-hydroxyl of shikimate-3-phosphate (S3P) to produce enolpyruvyl shikimate-3-phosphate and inorganic phosphate. In Bacillus cereus (strain B4264), this protein is 3-phosphoshikimate 1-carboxyvinyltransferase.